A 150-amino-acid polypeptide reads, in one-letter code: Galectin-1 (150 aa).

The 133-residue stretch at 9–141 folds into the Galectin domain; it reads NQIKLQDDFK…FSSPVTVDIH (133 aa). Residues H51, R55, N64, and E75 each contribute to the a carbohydrate site.

As to quaternary structure, homotetramer. Oligomerization is required for carbohydrate binding. Most abundant in fruiting bodies. Very low levels of expression in asexual vegetative mycelia.

It is found in the secreted. Its subcellular location is the extracellular space. The protein resides in the extracellular matrix. It localises to the cell wall. The protein localises to the endomembrane system. In terms of biological role, binds lactose. May play a role in fruiting body formation. The sequence is that of Galectin-1 (Cgl1) from Coprinopsis cinerea (strain Okayama-7 / 130 / ATCC MYA-4618 / FGSC 9003) (Inky cap fungus).